The sequence spans 464 residues: Glycosyl hydrolase family 109 protein 1 (464 aa).

The N-terminal stretch at Met-1–Ala-16 is a signal peptide. Cys-17 carries the N-palmitoyl cysteine lipid modification. Cys-17 is lipidated: S-diacylglycerol cysteine. Residues Met-63–Arg-64, Asp-85, Trp-134–His-137, Glu-154–Val-155, and Asn-183 contribute to the NAD(+) site. Residues Tyr-212, Arg-228, Tyr-240 to His-243, and Tyr-318 contribute to the substrate site. An NAD(+)-binding site is contributed by Tyr-240.

The protein belongs to the Gfo/Idh/MocA family. Glycosyl hydrolase 109 subfamily. NAD(+) serves as cofactor.

Its subcellular location is the cell membrane. In terms of biological role, glycosidase. Has no alpha-N-acetylgalactosaminidase activity. This is Glycosyl hydrolase family 109 protein 1 from Bacteroides fragilis (strain ATCC 25285 / DSM 2151 / CCUG 4856 / JCM 11019 / LMG 10263 / NCTC 9343 / Onslow / VPI 2553 / EN-2).